Reading from the N-terminus, the 227-residue chain is Probable septum site-determining protein MinC (227 aa).

It belongs to the MinC family. As to quaternary structure, interacts with MinD and FtsZ.

Functionally, cell division inhibitor that blocks the formation of polar Z ring septums. Rapidly oscillates between the poles of the cell to destabilize FtsZ filaments that have formed before they mature into polar Z rings. Prevents FtsZ polymerization. The sequence is that of Probable septum site-determining protein MinC from Geobacillus thermodenitrificans (strain NG80-2).